The chain runs to 293 residues: Glutamyl-Q tRNA(Asp) synthetase (293 aa).

Residues R9–S13 and E45 each bind L-glutamate. A 'HIGH' region motif is present at residues P12–S22. 4 residues coordinate Zn(2+): C101, C103, Y115, and C119. Residues Y172 and R190 each contribute to the L-glutamate site. The 'KMSKS' region motif lies at K228–Q232. Position 231 (K231) interacts with ATP.

Belongs to the class-I aminoacyl-tRNA synthetase family. GluQ subfamily. Zn(2+) is required as a cofactor.

Its function is as follows. Catalyzes the tRNA-independent activation of glutamate in presence of ATP and the subsequent transfer of glutamate onto a tRNA(Asp). Glutamate is transferred on the 2-amino-5-(4,5-dihydroxy-2-cyclopenten-1-yl) moiety of the queuosine in the wobble position of the QUC anticodon. This chain is Glutamyl-Q tRNA(Asp) synthetase, found in Klebsiella pneumoniae (strain 342).